The primary structure comprises 274 residues: UPF0173 metal-dependent hydrolase AnaeK_1127 (274 aa).

This sequence belongs to the UPF0173 family.

This Anaeromyxobacter sp. (strain K) protein is UPF0173 metal-dependent hydrolase AnaeK_1127.